The sequence spans 330 residues: Protoheme IX farnesyltransferase (330 aa).

9 consecutive transmembrane segments (helical) span residues 30–50, 58–78, 106–126, 127–147, 155–175, 182–202, 228–248, 249–269, and 281–301; these read LVKPKIIALLLMTTAGAMWMA, FFITLLGGGIAAAAANVINMV, LIFSGILALAAFGLLAIFTNL, LAAGLAMSGILVYVGVYTHWL, IVIGGAAGAIPPLVGWAATTG, WVMFAIIFLWTPPHFWALAIL, ILLYALLMVPVSLLLVYPLGM, LGSFYLSAAALLGSLLVWKAV, and AASLFTFANLYLLLLCGAMGL.

It belongs to the UbiA prenyltransferase family. Protoheme IX farnesyltransferase subfamily.

The protein resides in the cell inner membrane. It carries out the reaction heme b + (2E,6E)-farnesyl diphosphate + H2O = Fe(II)-heme o + diphosphate. Its pathway is porphyrin-containing compound metabolism; heme O biosynthesis; heme O from protoheme: step 1/1. Its function is as follows. Converts heme B (protoheme IX) to heme O by substitution of the vinyl group on carbon 2 of heme B porphyrin ring with a hydroxyethyl farnesyl side group. In Synechococcus sp. (strain JA-2-3B'a(2-13)) (Cyanobacteria bacterium Yellowstone B-Prime), this protein is Protoheme IX farnesyltransferase.